We begin with the raw amino-acid sequence, 415 residues long: Gamma-glutamyl phosphate reductase (415 aa).

Belongs to the gamma-glutamyl phosphate reductase family.

Its subcellular location is the cytoplasm. It carries out the reaction L-glutamate 5-semialdehyde + phosphate + NADP(+) = L-glutamyl 5-phosphate + NADPH + H(+). It functions in the pathway amino-acid biosynthesis; L-proline biosynthesis; L-glutamate 5-semialdehyde from L-glutamate: step 2/2. In terms of biological role, catalyzes the NADPH-dependent reduction of L-glutamate 5-phosphate into L-glutamate 5-semialdehyde and phosphate. The product spontaneously undergoes cyclization to form 1-pyrroline-5-carboxylate. The sequence is that of Gamma-glutamyl phosphate reductase from Bacillus cereus (strain B4264).